A 976-amino-acid chain; its full sequence is Probable outer membrane protein PmpA (976 aa).

Positions 1–50 (MNQVIKTIALCYQKYISRASNKTFSIHNTLSLSLLPKCLLGSLIIYTSHA) are cleaved as a signal peptide. In terms of domain architecture, Autotransporter spans 671–976 (GNAIPNSLWS…SLSCGGYVGF (306 aa)).

It belongs to the PMP outer membrane protein family.

It is found in the secreted. It localises to the cell wall. The protein localises to the cell outer membrane. The polypeptide is Probable outer membrane protein PmpA (pmpA) (Chlamydia muridarum (strain MoPn / Nigg)).